Here is a 320-residue protein sequence, read N- to C-terminus: tRNA pseudouridine synthase B (320 aa).

D49 (nucleophile) is an active-site residue.

This sequence belongs to the pseudouridine synthase TruB family. Type 1 subfamily.

It carries out the reaction uridine(55) in tRNA = pseudouridine(55) in tRNA. Its function is as follows. Responsible for synthesis of pseudouridine from uracil-55 in the psi GC loop of transfer RNAs. This chain is tRNA pseudouridine synthase B, found in Bartonella bacilliformis (strain ATCC 35685 / KC583 / Herrer 020/F12,63).